Here is a 730-residue protein sequence, read N- to C-terminus: Transcription factor verF (730 aa).

The segment at 19-41 adopts a C2H2-type 1 zinc-finger fold; it reads YECSLCLKRYKRREHLFRHIGSH. The C2H2-type 2; atypical zinc-finger motif lies at 47-69; it reads YQCNSCDGAFQRADVLKRHLRTC. Residues 83 to 109 constitute a DNA-binding region (zn(2)-C6 fungal-type); that stretch reads CDRCVRQKKACSSHQPCHSCAKKGAQC. The span at 120–129 shows a compositional bias: polar residues; sequence RLSQHSSTNH. Residues 120–151 form a disordered region; sequence RLSQHSSTNHTPKDQELSTQFTNPPPPPSTST.

It is found in the nucleus. Transcription factor; part of the gene cluster that mediates the biosynthesis of the neurotoxin verrucosidin, a methylated alpha-pyrone polyketide that inhibits oxidative phosphorylation in mitochondria and thereby causes neurological diseases. This Penicillium polonicum protein is Transcription factor verF.